Consider the following 156-residue polypeptide: MPRRRVVAKREVLPDPKFGSSTLAKFMNHVMISGKKSTAEKIVYGALDIVSEKLNKDPLETFSEALENISPLVEVKSRRVGGATYQVPVEVRPARRTALAMRWLVEYSRNRGEKSMAQRLAGELIDAAQSKGGAVKKREDVHRMAEANKAFSHFRF.

The protein belongs to the universal ribosomal protein uS7 family. Part of the 30S ribosomal subunit. Contacts proteins S9 and S11.

Functionally, one of the primary rRNA binding proteins, it binds directly to 16S rRNA where it nucleates assembly of the head domain of the 30S subunit. Is located at the subunit interface close to the decoding center, probably blocks exit of the E-site tRNA. In Saccharophagus degradans (strain 2-40 / ATCC 43961 / DSM 17024), this protein is Small ribosomal subunit protein uS7.